The following is an 821-amino-acid chain: Phenylalanine--tRNA ligase beta subunit (821 aa).

One can recognise a tRNA-binding domain in the interval 39-149; the sequence is RTWAEGVVVG…DAVTVGEDVR (111 aa). The 95-residue stretch at 409–503 folds into the B5 domain; it reads PLERTLTLRL…RLYGYDRFEE (95 aa). Residues Asp-481, Asp-487, Glu-490, and Glu-491 each coordinate Mg(2+). Residues 724–820 enclose the FDX-ACB domain; it reads STYPASDRDL…LVEKYAVTLR (97 aa).

It belongs to the phenylalanyl-tRNA synthetase beta subunit family. Type 1 subfamily. As to quaternary structure, tetramer of two alpha and two beta subunits. The cofactor is Mg(2+).

It is found in the cytoplasm. It catalyses the reaction tRNA(Phe) + L-phenylalanine + ATP = L-phenylalanyl-tRNA(Phe) + AMP + diphosphate + H(+). The sequence is that of Phenylalanine--tRNA ligase beta subunit from Thermosynechococcus vestitus (strain NIES-2133 / IAM M-273 / BP-1).